The chain runs to 153 residues: Deoxyuridine 5'-triphosphate nucleotidohydrolase (153 aa).

Substrate is bound by residues 71–73 (RSG), asparagine 84, 88–90 (TID), and lysine 98.

The protein belongs to the dUTPase family. Requires Mg(2+) as cofactor.

The catalysed reaction is dUTP + H2O = dUMP + diphosphate + H(+). It participates in pyrimidine metabolism; dUMP biosynthesis; dUMP from dCTP (dUTP route): step 2/2. Its function is as follows. This enzyme is involved in nucleotide metabolism: it produces dUMP, the immediate precursor of thymidine nucleotides and it decreases the intracellular concentration of dUTP so that uracil cannot be incorporated into DNA. This is Deoxyuridine 5'-triphosphate nucleotidohydrolase from Wolbachia pipientis subsp. Culex pipiens (strain wPip).